Reading from the N-terminus, the 486-residue chain is Malonate-semialdehyde dehydrogenase (486 aa).

NAD(+) is bound by residues Phe-154, Lys-178, Glu-181, Arg-182, and Ser-231. The active-site Nucleophile is the Cys-286. NAD(+) is bound at residue Glu-386.

It belongs to the aldehyde dehydrogenase family. IolA subfamily. In terms of assembly, homotetramer.

It carries out the reaction 3-oxopropanoate + NAD(+) + CoA + H2O = hydrogencarbonate + acetyl-CoA + NADH + H(+). The enzyme catalyses 2-methyl-3-oxopropanoate + NAD(+) + CoA + H2O = propanoyl-CoA + hydrogencarbonate + NADH + H(+). It functions in the pathway polyol metabolism; myo-inositol degradation into acetyl-CoA; acetyl-CoA from myo-inositol: step 7/7. Catalyzes the oxidation of malonate semialdehyde (MSA) and methylmalonate semialdehyde (MMSA) into acetyl-CoA and propanoyl-CoA, respectively. Is involved in a myo-inositol catabolic pathway. Bicarbonate, and not CO2, is the end-product of the enzymatic reaction. This is Malonate-semialdehyde dehydrogenase from Bacillus cytotoxicus (strain DSM 22905 / CIP 110041 / 391-98 / NVH 391-98).